Reading from the N-terminus, the 336-residue chain is Immune-associated nucleotide-binding protein 6 (336 aa).

Residues E33 to Q241 enclose the AIG1-type G domain. The G1 stretch occupies residues G42–S49. Residues G42 to A50 and S63 each bind GTP. Residues G69–R73 are G2. The tract at residues D91 to G94 is G3. The interval T161–D164 is G4. A G5 region spans residues D200–R202. N201 lines the GTP pocket. Residues H237–Q270 adopt a coiled-coil conformation.

Belongs to the TRAFAC class TrmE-Era-EngA-EngB-Septin-like GTPase superfamily. AIG1/Toc34/Toc159-like paraseptin GTPase family. IAN subfamily. Mostly expressed in pollen. Also detected in lateral roots and radicles.

This Arabidopsis thaliana (Mouse-ear cress) protein is Immune-associated nucleotide-binding protein 6.